The chain runs to 30 residues: Kalata-B14 (30 aa).

The cyclopeptide (Gly-Asp) cross-link spans 1-30; that stretch reads GLPVCGESCFGGTCNTPGCACDPWPVCTRD. Disulfide bonds link C5–C19, C9–C21, and C14–C27.

This is a cyclic peptide.

Functionally, probably participates in a plant defense mechanism. This chain is Kalata-B14, found in Oldenlandia affinis.